The primary structure comprises 302 residues: Oxygen-dependent coproporphyrinogen-III oxidase (302 aa).

Serine 94 contacts substrate. A divalent metal cation is bound by residues histidine 98 and histidine 108. Histidine 108 acts as the Proton donor in catalysis. A substrate-binding site is contributed by 110 to 112 (NVR). A divalent metal cation-binding residues include histidine 147 and histidine 177. The important for dimerization stretch occupies residues 242–277 (YVEFNLVYDRGTLFGLQTGGRTESILMSMPPLARWE). 260–262 (GGR) contacts substrate.

This sequence belongs to the aerobic coproporphyrinogen-III oxidase family. In terms of assembly, homodimer. The cofactor is a divalent metal cation.

It localises to the cytoplasm. The enzyme catalyses coproporphyrinogen III + O2 + 2 H(+) = protoporphyrinogen IX + 2 CO2 + 2 H2O. It participates in porphyrin-containing compound metabolism; protoporphyrin-IX biosynthesis; protoporphyrinogen-IX from coproporphyrinogen-III (O2 route): step 1/1. Involved in the heme biosynthesis. Catalyzes the aerobic oxidative decarboxylation of propionate groups of rings A and B of coproporphyrinogen-III to yield the vinyl groups in protoporphyrinogen-IX. In Aeromonas hydrophila subsp. hydrophila (strain ATCC 7966 / DSM 30187 / BCRC 13018 / CCUG 14551 / JCM 1027 / KCTC 2358 / NCIMB 9240 / NCTC 8049), this protein is Oxygen-dependent coproporphyrinogen-III oxidase.